Reading from the N-terminus, the 451-residue chain is UDP-N-acetylmuramoylalanine--D-glutamate ligase (451 aa).

118–124 (GTKGKST) provides a ligand contact to ATP.

Belongs to the MurCDEF family.

The protein localises to the cytoplasm. It catalyses the reaction UDP-N-acetyl-alpha-D-muramoyl-L-alanine + D-glutamate + ATP = UDP-N-acetyl-alpha-D-muramoyl-L-alanyl-D-glutamate + ADP + phosphate + H(+). Its pathway is cell wall biogenesis; peptidoglycan biosynthesis. Functionally, cell wall formation. Catalyzes the addition of glutamate to the nucleotide precursor UDP-N-acetylmuramoyl-L-alanine (UMA). The chain is UDP-N-acetylmuramoylalanine--D-glutamate ligase from Borreliella afzelii (strain PKo) (Borrelia afzelii).